The chain runs to 233 residues: Urease accessory protein UreF (233 aa).

This sequence belongs to the UreF family. In terms of assembly, ureD, UreF and UreG form a complex that acts as a GTP-hydrolysis-dependent molecular chaperone, activating the urease apoprotein by helping to assemble the nickel containing metallocenter of UreC. The UreE protein probably delivers the nickel.

It localises to the cytoplasm. Its function is as follows. Required for maturation of urease via the functional incorporation of the urease nickel metallocenter. This Polaromonas sp. (strain JS666 / ATCC BAA-500) protein is Urease accessory protein UreF.